The chain runs to 524 residues: Bifunctional purine biosynthesis protein PurH (524 aa).

Positions 1–145 constitute an MGS-like domain; the sequence is MIKQALLSVS…KNHRDVTVIV (145 aa).

It belongs to the PurH family.

The enzyme catalyses (6R)-10-formyltetrahydrofolate + 5-amino-1-(5-phospho-beta-D-ribosyl)imidazole-4-carboxamide = 5-formamido-1-(5-phospho-D-ribosyl)imidazole-4-carboxamide + (6S)-5,6,7,8-tetrahydrofolate. It catalyses the reaction IMP + H2O = 5-formamido-1-(5-phospho-D-ribosyl)imidazole-4-carboxamide. It functions in the pathway purine metabolism; IMP biosynthesis via de novo pathway; 5-formamido-1-(5-phospho-D-ribosyl)imidazole-4-carboxamide from 5-amino-1-(5-phospho-D-ribosyl)imidazole-4-carboxamide (10-formyl THF route): step 1/1. The protein operates within purine metabolism; IMP biosynthesis via de novo pathway; IMP from 5-formamido-1-(5-phospho-D-ribosyl)imidazole-4-carboxamide: step 1/1. The protein is Bifunctional purine biosynthesis protein PurH of Cupriavidus taiwanensis (strain DSM 17343 / BCRC 17206 / CCUG 44338 / CIP 107171 / LMG 19424 / R1) (Ralstonia taiwanensis (strain LMG 19424)).